The chain runs to 265 residues: Deoxycytidine kinase 2 (265 aa).

ATP is bound at residue 31–39 (GNIAAGKST). 3 residues coordinate substrate: E56, Y89, and Q100. E130 (proton acceptor) is an active-site residue. 2 residues coordinate substrate: R131 and D136. 191 to 195 (RLQKR) is a binding site for ATP. E200 contacts substrate. 243-245 (EDF) is a binding site for ATP.

Belongs to the DCK/DGK family. As to quaternary structure, homodimer. As to expression, expressed at high levels in adult intestine, spleen, thymus and testis with lower levels in skeletal muscle and eye. In the embryo, expressed at higher levels until day 10 with lower levels in later stages.

It is found in the nucleus. The enzyme catalyses 2'-deoxycytidine + a ribonucleoside 5'-triphosphate = dCMP + a ribonucleoside 5'-diphosphate + H(+). It carries out the reaction 2'-deoxyguanosine + ATP = dGMP + ADP + H(+). It catalyses the reaction 2'-deoxyadenosine + ATP = dAMP + ADP + H(+). Its function is as follows. Phosphorylates the deoxyribonucleosides deoxyadenosine, deoxycytidine and deoxyguanosine. Shows highest activity against deoxyguanosine followed by deoxycytidine and then deoxyadenosine. Shows only very minor activity against deoxyuridine and deoxythymidine. This chain is Deoxycytidine kinase 2, found in Gallus gallus (Chicken).